A 464-amino-acid polypeptide reads, in one-letter code: tRNA modification GTPase MnmE (464 aa).

Residues Arg25, Glu87, and Lys130 each coordinate (6S)-5-formyl-5,6,7,8-tetrahydrofolate. The TrmE-type G domain maps to Gly226–Gly386. Asn236 serves as a coordination point for K(+). Residues Asn236 to Ser241, Thr255 to Thr261, and Asp280 to Gly283 each bind GTP. Position 240 (Ser240) interacts with Mg(2+). K(+) is bound by residues Thr255, Ile257, and Thr260. Thr261 contributes to the Mg(2+) binding site. Residue Lys464 coordinates (6S)-5-formyl-5,6,7,8-tetrahydrofolate.

Belongs to the TRAFAC class TrmE-Era-EngA-EngB-Septin-like GTPase superfamily. TrmE GTPase family. Homodimer. Heterotetramer of two MnmE and two MnmG subunits. K(+) is required as a cofactor.

The protein resides in the cytoplasm. In terms of biological role, exhibits a very high intrinsic GTPase hydrolysis rate. Involved in the addition of a carboxymethylaminomethyl (cmnm) group at the wobble position (U34) of certain tRNAs, forming tRNA-cmnm(5)s(2)U34. In Burkholderia ambifaria (strain MC40-6), this protein is tRNA modification GTPase MnmE.